A 127-amino-acid chain; its full sequence is Glycine cleavage system H protein (127 aa).

The region spanning 27 to 109 (TVRVGITHIA…YGEGWLYEVK (83 aa)) is the Lipoyl-binding domain. Residue lysine 68 is modified to N6-lipoyllysine.

It belongs to the GcvH family. As to quaternary structure, the glycine cleavage system is composed of four proteins: P, T, L and H. (R)-lipoate serves as cofactor.

In terms of biological role, the glycine cleavage system catalyzes the degradation of glycine. The H protein shuttles the methylamine group of glycine from the P protein to the T protein. The sequence is that of Glycine cleavage system H protein from Corynebacterium jeikeium (strain K411).